The sequence spans 310 residues: Putative S-adenosyl-L-methionine-dependent methyltransferase Mvan_1346 (310 aa).

S-adenosyl-L-methionine-binding positions include D136 and 165–166 (DL).

Belongs to the UPF0677 family.

Functionally, exhibits S-adenosyl-L-methionine-dependent methyltransferase activity. This chain is Putative S-adenosyl-L-methionine-dependent methyltransferase Mvan_1346, found in Mycolicibacterium vanbaalenii (strain DSM 7251 / JCM 13017 / BCRC 16820 / KCTC 9966 / NRRL B-24157 / PYR-1) (Mycobacterium vanbaalenii).